The chain runs to 365 residues: Peptide chain release factor 2 (365 aa).

At Gln-252 the chain carries N5-methylglutamine.

The protein belongs to the prokaryotic/mitochondrial release factor family. In terms of processing, methylated by PrmC. Methylation increases the termination efficiency of RF2.

Its subcellular location is the cytoplasm. In terms of biological role, peptide chain release factor 2 directs the termination of translation in response to the peptide chain termination codons UGA and UAA. The chain is Peptide chain release factor 2 from Colwellia psychrerythraea (strain 34H / ATCC BAA-681) (Vibrio psychroerythus).